The following is a 133-amino-acid chain: ATP synthase epsilon chain (133 aa).

Belongs to the ATPase epsilon chain family. F-type ATPases have 2 components, CF(1) - the catalytic core - and CF(0) - the membrane proton channel. CF(1) has five subunits: alpha(3), beta(3), gamma(1), delta(1), epsilon(1). CF(0) has three main subunits: a, b and c.

It is found in the cell membrane. Functionally, produces ATP from ADP in the presence of a proton gradient across the membrane. The sequence is that of ATP synthase epsilon chain from Bacillus cereus (strain ATCC 14579 / DSM 31 / CCUG 7414 / JCM 2152 / NBRC 15305 / NCIMB 9373 / NCTC 2599 / NRRL B-3711).